The following is a 280-amino-acid chain: tRNA (guanine-N(1)-)-methyltransferase (280 aa).

The tract at residues 71–94 (DDVSSGTASTQDLQSALPHLSKPR) is disordered. The span at 74–84 (SSGTASTQDLQ) shows a compositional bias: polar residues. Residues Gly-146 and 170-175 (IGDYVL) contribute to the S-adenosyl-L-methionine site.

Belongs to the RNA methyltransferase TrmD family. In terms of assembly, homodimer.

The protein localises to the cytoplasm. The enzyme catalyses guanosine(37) in tRNA + S-adenosyl-L-methionine = N(1)-methylguanosine(37) in tRNA + S-adenosyl-L-homocysteine + H(+). Its function is as follows. Specifically methylates guanosine-37 in various tRNAs. The sequence is that of tRNA (guanine-N(1)-)-methyltransferase from Corynebacterium aurimucosum (strain ATCC 700975 / DSM 44827 / CIP 107346 / CN-1) (Corynebacterium nigricans).